A 98-amino-acid chain; its full sequence is Small ribosomal subunit protein uS17 (98 aa).

This sequence belongs to the universal ribosomal protein uS17 family. Part of the 30S ribosomal subunit.

One of the primary rRNA binding proteins, it binds specifically to the 5'-end of 16S ribosomal RNA. The chain is Small ribosomal subunit protein uS17 from Mesomycoplasma hyopneumoniae (strain 232) (Mycoplasma hyopneumoniae).